We begin with the raw amino-acid sequence, 205 residues long: Protease (205 aa).

Residues histidine 54, aspartate 71, and cysteine 120 contribute to the active site.

It belongs to the peptidase C5 family. Interacts with protease cofactor pVI-C; this interaction is necessary for protease activation.

It is found in the virion. It localises to the host nucleus. The catalysed reaction is Cleaves proteins of the adenovirus and its host cell at two consensus sites: -Yaa-Xaa-Gly-Gly-|-Xaa- and -Yaa-Xaa-Gly-Xaa-|-Gly- (in which Yaa is Met, Ile or Leu, and Xaa is any amino acid).. Requires DNA and protease cofactor for maximal activation. Inside nascent virions, becomes partially activated by binding to the viral DNA, allowing it to cleave the cofactor that binds to the protease and fully activates it. Actin, like the viral protease cofactor, seems to act as a cofactor in the cleavage of cytokeratin 18 and of actin itself. Functionally, cleaves viral precursor proteins (pTP, pIIIa, pVI, pVII, pVIII, and pX) inside newly assembled particles giving rise to mature virions. Protease complexed to its cofactor slides along the viral DNA to specifically locate and cleave the viral precursors. Mature virions have a weakened organization compared to the unmature virions, thereby facilitating subsequent uncoating. Without maturation, the particle lacks infectivity and is unable to uncoat. Late in adenovirus infection, in the cytoplasm, may participate in the cytoskeleton destruction. Cleaves host cell cytoskeletal keratins K7 and K18. This chain is Protease, found in Bos taurus (Bovine).